We begin with the raw amino-acid sequence, 319 residues long: Tetrahydromethanopterin S-methyltransferase subunit H (319 aa).

It belongs to the MtrH family. In terms of assembly, the complex is composed of 8 subunits; MtrA, MtrB, MtrC, MtrD, MtrE, MtrF, MtrG and MtrH.

The enzyme catalyses 5-methyl-5,6,7,8-tetrahydromethanopterin + coenzyme M + 2 Na(+)(in) = 5,6,7,8-tetrahydromethanopterin + methyl-coenzyme M + 2 Na(+)(out). It functions in the pathway one-carbon metabolism; methanogenesis from CO(2); methyl-coenzyme M from 5,10-methylene-5,6,7,8-tetrahydromethanopterin: step 2/2. Functionally, part of a complex that catalyzes the formation of methyl-coenzyme M and tetrahydromethanopterin from coenzyme M and methyl-tetrahydromethanopterin. This is an energy-conserving, sodium-ion translocating step. MtrH catalyzes the transfer of the methyl group from methyl-tetrahydromethanopterin to the corrinoid prosthetic group of MtrA. The polypeptide is Tetrahydromethanopterin S-methyltransferase subunit H (Methanococcus maripaludis (strain C5 / ATCC BAA-1333)).